A 226-amino-acid polypeptide reads, in one-letter code: Glutathione peroxidase 3 (226 aa).

The N-terminal stretch at 1 to 24 (MARILRASCLLSLLLAGFVPPGRG) is a signal peptide. Residue U73 is part of the active site. Position 73 (U73) is a non-standard amino acid, selenocysteine.

This sequence belongs to the glutathione peroxidase family. Homotetramer. In terms of tissue distribution, secreted in plasma.

Its subcellular location is the secreted. It catalyses the reaction 2 glutathione + H2O2 = glutathione disulfide + 2 H2O. It carries out the reaction tert-butyl hydroperoxide + 2 glutathione = tert-butanol + glutathione disulfide + H2O. Functionally, protects cells and enzymes from oxidative damage, by catalyzing the reduction of hydrogen peroxide, lipid peroxides and organic hydroperoxide, by glutathione. The sequence is that of Glutathione peroxidase 3 from Mus musculus (Mouse).